The sequence spans 557 residues: Pre-mRNA-processing protein 45 (557 aa).

Disordered regions lie at residues 1-32 (MALL…TSHA), 208-243 (EQDP…KVSA), and 316-444 (MAEK…MSSD). A compositionally biased stretch (acidic residues) spans 16–25 (DFDDEEEDYV). A compositionally biased stretch (pro residues) spans 224 to 235 (RGPPSPPPPVLH). Phosphoserine occurs at positions 228 and 236. Residues 316–327 (MAEKEKQEKEQR) are compositionally biased toward basic and acidic residues. S376 carries the post-translational modification Phosphoserine. The segment covering 386–430 (EAFRRRQELRRERRRQAEKDLRLSRMGAEKRAKLAEKDRPRDVAE) has biased composition (basic and acidic residues).

The protein belongs to the SNW family. Homodimer. Interacts with cyp1 and the small 23 kDa subunit of the splicing factor U2AF (u2af23). Belongs to the 40S cdc5-associated complex (or cwf complex), a spliceosome sub-complex reminiscent of a late-stage spliceosome composed of the U2, U5 and U6 snRNAs and at least brr2, cdc5, cwf2/prp3, cwf3/syf1, cwf4/syf3, cwf5/ecm2, spp42/cwf6, cwf7/spf27, cwf8, cwf9, cwf10, cwf11, cwf12, prp45/cwf13, cwf14, cwf15, cwf16, cwf17, cwf18, cwf19, cwf20, cwf21, cwf22, cwf23, cwf24, cwf25, cwf26, cyp7/cwf27, cwf28, cwf29/ist3, lea1, msl1, prp5/cwf1, prp10, prp12/sap130, prp17, prp22, sap61, sap62, sap114, sap145, slu7, smb1, smd1, smd3, smf1, smg1 and syf2.

Its subcellular location is the nucleus. Functionally, involved in pre-mRNA splicing. The sequence is that of Pre-mRNA-processing protein 45 (prp45) from Schizosaccharomyces pombe (strain 972 / ATCC 24843) (Fission yeast).